The following is a 70-amino-acid chain: U-scutigerotoxin(02)-Tl1a (70 aa).

The N-terminal stretch at 1–17 is a signal peptide; sequence MKYILLGLLLMVVLANA.

Belongs to the scutigerotoxin-02 family. In terms of processing, contains 4 disulfide bonds. As to expression, expressed by the venom gland.

It is found in the secreted. This chain is U-scutigerotoxin(02)-Tl1a, found in Thereuopoda longicornis (Long-legged centipede).